The primary structure comprises 118 residues: Histone H4 (118 aa).

The disordered stretch occupies residues 1 to 39 (MATDTGSGRGKGGKGVTLGKGSKGAKASKGGKRIRTKTQ). The span at 7–22 (SGRGKGGKGVTLGKGS) shows a compositional bias: gly residues.

It belongs to the histone H4 family. As to quaternary structure, the nucleosome is a histone octamer containing two molecules each of H2A, H2B, H3 and H4 assembled in one H3-H4 heterotetramer and two H2A-H2B heterodimers. The octamer wraps approximately 147 bp of DNA.

The protein localises to the nucleus. It localises to the chromosome. In terms of biological role, core component of nucleosome. Nucleosomes wrap and compact DNA into chromatin, limiting DNA accessibility to the cellular machineries which require DNA as a template. Histones thereby play a central role in transcription regulation, DNA repair, DNA replication and chromosomal stability. DNA accessibility is regulated via a complex set of post-translational modifications of histones, also called histone code, and nucleosome remodeling. The sequence is that of Histone H4 from Entamoeba histolytica (strain ATCC 30459 / HM-1:IMSS / ABRM).